The sequence spans 145 residues: D-aminoacyl-tRNA deacylase (145 aa).

The Gly-cisPro motif, important for rejection of L-amino acids signature appears at 137–138 (GP).

The protein belongs to the DTD family. Homodimer.

The protein resides in the cytoplasm. The enzyme catalyses glycyl-tRNA(Ala) + H2O = tRNA(Ala) + glycine + H(+). The catalysed reaction is a D-aminoacyl-tRNA + H2O = a tRNA + a D-alpha-amino acid + H(+). An aminoacyl-tRNA editing enzyme that deacylates mischarged D-aminoacyl-tRNAs. Also deacylates mischarged glycyl-tRNA(Ala), protecting cells against glycine mischarging by AlaRS. Acts via tRNA-based rather than protein-based catalysis; rejects L-amino acids rather than detecting D-amino acids in the active site. By recycling D-aminoacyl-tRNA to D-amino acids and free tRNA molecules, this enzyme counteracts the toxicity associated with the formation of D-aminoacyl-tRNA entities in vivo and helps enforce protein L-homochirality. This Escherichia coli O81 (strain ED1a) protein is D-aminoacyl-tRNA deacylase.